A 472-amino-acid chain; its full sequence is MAWNTNLRWRLPLTCLLLEVVMVILFGVFVRYDFDADAHWWSWRTEFYYRYPSFQDVHVMVFVGFGFLMTFLQRYGFSAVGFNFLLAAFGIQWALLMQGWFHFLQGRYIVVGVENLINADFCVASVCVAFGAVLGKVSPIQLLIMTFFQVTLFAVNEFILLNLLKVKDAGGSMTIHTFGAYFGLTVTRILYRRNLEQSKERQNSVYQSDLFAMIGTLFLWMYWPSFNSAISYHGDSQHRAAINTYCSLAACVLTSVAISSALHKKGKLDMVHIQNATPAGGVAVGTAAEMMLMPYGALIVGFVCGIISTLGFVYLTPFLESRLHIQDTCGINNLHGIPGIIGGIVGAVTAASASLEVYGKEGLVHSFDFQGFKRDWTARTQGKFQIYGLLVTLAMALMGGIIVGVGLILRLPFWGQPSDENCFEDAVYWEMPEGNSTVYIPEDPTFKPSGPSVPSVPMVSPLPMASSVPLVP.

Residues 1–9 (MAWNTNLRW) are Cytoplasmic-facing. Residues 10 to 30 (RLPLTCLLLEVVMVILFGVFV) form a helical membrane-spanning segment. The Extracellular segment spans residues 31 to 51 (RYDFDADAHWWSWRTEFYYRY). Residues 52–72 (PSFQDVHVMVFVGFGFLMTFL) form a helical membrane-spanning segment. The Cytoplasmic segment spans residues 73–76 (QRYG). The chain crosses the membrane as a helical span at residues 77–97 (FSAVGFNFLLAAFGIQWALLM). Residues 98-114 (QGWFHFLQGRYIVVGVE) lie on the Extracellular side of the membrane. A helical membrane pass occupies residues 115-135 (NLINADFCVASVCVAFGAVLG). The Cytoplasmic portion of the chain corresponds to 136-139 (KVSP). The helical transmembrane segment at 140 to 160 (IQLLIMTFFQVTLFAVNEFIL) threads the bilayer. Residues 161–168 (LNLLKVKD) lie on the Extracellular side of the membrane. The helical transmembrane segment at 169–191 (AGGSMTIHTFGAYFGLTVTRILY) threads the bilayer. At 192-209 (RRNLEQSKERQNSVYQSD) the chain is on the cytoplasmic side. A helical membrane pass occupies residues 210–230 (LFAMIGTLFLWMYWPSFNSAI). Residues 231–241 (SYHGDSQHRAA) are Extracellular-facing. A helical transmembrane segment spans residues 242–262 (INTYCSLAACVLTSVAISSAL). The Cytoplasmic portion of the chain corresponds to 263–294 (HKKGKLDMVHIQNATPAGGVAVGTAAEMMLMP). A helical membrane pass occupies residues 295–315 (YGALIVGFVCGIISTLGFVYL). At 316–336 (TPFLESRLHIQDTCGINNLHG) the chain is on the extracellular side. The chain crosses the membrane as a helical span at residues 337–357 (IPGIIGGIVGAVTAASASLEV). Residues 358 to 388 (YGKEGLVHSFDFQGFKRDWTARTQGKFQIYG) are Cytoplasmic-facing. Residues 389 to 409 (LLVTLAMALMGGIIVGVGLIL) form a helical membrane-spanning segment. The Extracellular portion of the chain corresponds to 410–450 (RLPFWGQPSDENCFEDAVYWEMPEGNSTVYIPEDPTFKPSG). Asparagine 435 carries an N-linked (GlcNAc...) asparagine glycan. A helical transmembrane segment spans residues 451-471 (PSVPSVPMVSPLPMASSVPLV). Position 472 (proline 472) is a topological domain, cytoplasmic.

The protein belongs to the ammonium transporter (TC 2.A.49) family. Rh subfamily. As to quaternary structure, homotrimer. Post-translationally, N-glycosylated.

It is found in the cell membrane. It localises to the apical cell membrane. It catalyses the reaction NH4(+)(in) = NH4(+)(out). The enzyme catalyses methylamine(out) = methylamine(in). It carries out the reaction CO2(out) = CO2(in). Ammonium transporter involved in the maintenance of acid-base homeostasis. Transports ammonium and its related derivative methylammonium across the plasma membrane of epithelial cells likely contributing to renal transepithelial ammonia transport and ammonia metabolism. Postulated to primarily mediate an electroneutral bidirectional transport of NH3 ammonia species according to a mechanism that implies interaction of an NH4(+) ion with acidic residues of the pore entry followed by dissociation of NH4(+) into NH3 and H(+). As a result NH3 transits through the central pore and is protonated on the extracellular side reforming NH4(+). May act as a CO2 channel providing for renal acid secretion. This Pongo abelii (Sumatran orangutan) protein is Ammonium transporter Rh type C (RHCG).